The following is a 152-amino-acid chain: Ribosomal RNA large subunit methyltransferase H (152 aa).

S-adenosyl-L-methionine-binding positions include Leu-69, Gly-96, and 118–123 (FGKLTF).

Belongs to the RNA methyltransferase RlmH family. As to quaternary structure, homodimer.

Its subcellular location is the cytoplasm. The enzyme catalyses pseudouridine(1915) in 23S rRNA + S-adenosyl-L-methionine = N(3)-methylpseudouridine(1915) in 23S rRNA + S-adenosyl-L-homocysteine + H(+). In terms of biological role, specifically methylates the pseudouridine at position 1915 (m3Psi1915) in 23S rRNA. This is Ribosomal RNA large subunit methyltransferase H from Mesomycoplasma hyopneumoniae (strain 7448) (Mycoplasma hyopneumoniae).